The sequence spans 295 residues: UDP-3-O-acyl-N-acetylglucosamine deacetylase (295 aa).

Positions 75, 232, and 236 each coordinate Zn(2+). Histidine 259 functions as the Proton donor in the catalytic mechanism.

Belongs to the LpxC family. Zn(2+) is required as a cofactor.

It catalyses the reaction a UDP-3-O-[(3R)-3-hydroxyacyl]-N-acetyl-alpha-D-glucosamine + H2O = a UDP-3-O-[(3R)-3-hydroxyacyl]-alpha-D-glucosamine + acetate. The protein operates within glycolipid biosynthesis; lipid IV(A) biosynthesis; lipid IV(A) from (3R)-3-hydroxytetradecanoyl-[acyl-carrier-protein] and UDP-N-acetyl-alpha-D-glucosamine: step 2/6. In terms of biological role, catalyzes the hydrolysis of UDP-3-O-myristoyl-N-acetylglucosamine to form UDP-3-O-myristoylglucosamine and acetate, the committed step in lipid A biosynthesis. In Helicobacter pylori (strain J99 / ATCC 700824) (Campylobacter pylori J99), this protein is UDP-3-O-acyl-N-acetylglucosamine deacetylase.